The sequence spans 387 residues: Chlorophyll synthase, chloroplastic (387 aa).

The transit peptide at 1–57 (MTSILNTVSTIHSSRVTSVDRVGVLSLRNSDSVEFTRRRSGFSTLIYESPGRRFVVR) directs the protein to the chloroplast. A disordered region spans residues 62-81 (DTDKVKSQTPDKAPAGGSSI). 7 helical membrane-spanning segments follow: residues 182–202 (VITQVWVLLLGGLGIAGILDV), 210–230 (TVFYLALGGSLLSYIYSAPPL), 241–261 (FALGASYISLPWWAGQALFGT), 266–286 (VVVLTLLYSIAGLGIAIVNDF), 311–331 (WICVGAIDITQLSVAGYLLAS), 336–356 (YALALVALIIPQIVFQFKYFL), and 364–384 (VKYQASAQPFLVLGIFVTALA).

Belongs to the UbiA prenyltransferase family. Chlorophyll synthase subfamily. In terms of tissue distribution, low level in flower buds, flowers, stems, leaves, greening cotyledons and immature siliques, but not in mature siliques or seeds.

The protein resides in the plastid. Its subcellular location is the chloroplast membrane. It catalyses the reaction phytyl diphosphate + chlorophyllide a + H(+) = chlorophyll a + diphosphate. The protein operates within porphyrin-containing compound metabolism; chlorophyll biosynthesis. Its function is as follows. Involved in one of the last steps of the biosynthesis of chlorophyll a. Catalyzes the esterification of chlorophillide a or b with a preference for geranylgeranyldiphosphate (GGPP) rather than for phytyldiphosphate (PhyPP). In Arabidopsis thaliana (Mouse-ear cress), this protein is Chlorophyll synthase, chloroplastic (CHLG).